A 336-amino-acid polypeptide reads, in one-letter code: Phenylalanine--tRNA ligase alpha subunit (336 aa).

Position 257 (Glu-257) interacts with Mg(2+).

It belongs to the class-II aminoacyl-tRNA synthetase family. Phe-tRNA synthetase alpha subunit type 1 subfamily. In terms of assembly, tetramer of two alpha and two beta subunits. Mg(2+) serves as cofactor.

The protein localises to the cytoplasm. It carries out the reaction tRNA(Phe) + L-phenylalanine + ATP = L-phenylalanyl-tRNA(Phe) + AMP + diphosphate + H(+). The chain is Phenylalanine--tRNA ligase alpha subunit from Xanthomonas campestris pv. campestris (strain 8004).